Reading from the N-terminus, the 782-residue chain is Polyribonucleotide nucleotidyltransferase (782 aa).

Mg(2+) contacts are provided by Asp514 and Asp520. Residues Pro580–Ile639 enclose the KH domain. The S1 motif domain occupies Gly651–Val723. Low complexity predominate over residues Ala734–Gln753. The segment at Ala734–His782 is disordered. Positions Arg766–Gln776 are enriched in basic and acidic residues.

It belongs to the polyribonucleotide nucleotidyltransferase family. Mg(2+) serves as cofactor.

The protein localises to the cytoplasm. The enzyme catalyses RNA(n+1) + phosphate = RNA(n) + a ribonucleoside 5'-diphosphate. Functionally, involved in mRNA degradation. Catalyzes the phosphorolysis of single-stranded polyribonucleotides processively in the 3'- to 5'-direction. This is Polyribonucleotide nucleotidyltransferase from Acidothermus cellulolyticus (strain ATCC 43068 / DSM 8971 / 11B).